The sequence spans 316 residues: Pantothenate kinase (316 aa).

Residue 95 to 102 coordinates ATP; sequence GSVAVGKS.

This sequence belongs to the prokaryotic pantothenate kinase family.

The protein resides in the cytoplasm. It catalyses the reaction (R)-pantothenate + ATP = (R)-4'-phosphopantothenate + ADP + H(+). Its pathway is cofactor biosynthesis; coenzyme A biosynthesis; CoA from (R)-pantothenate: step 1/5. The polypeptide is Pantothenate kinase (Shewanella sp. (strain MR-4)).